Here is a 471-residue protein sequence, read N- to C-terminus: Methionine aminopeptidase 2 (471 aa).

Disordered stretches follow at residues 16–80 (VVDD…IDRF) and 92–139 (CEHP…DFNR). Acidic residues predominate over residues 32–47 (EDGDDNDDAVNEGEAV). Residues 52–65 (KKKKKKNKKKKKKG) are compositionally biased toward basic residues. Positions 119 to 139 (AEERAKDDAKHGSDDPLDFNR) are enriched in basic and acidic residues. His-224 serves as a coordination point for substrate. A divalent metal cation-binding residues include Asp-244, Asp-255, and His-324. Position 332 (His-332) interacts with substrate. Glu-357 and Glu-452 together coordinate a divalent metal cation.

Belongs to the peptidase M24A family. Methionine aminopeptidase eukaryotic type 2 subfamily. It depends on Co(2+) as a cofactor. Zn(2+) is required as a cofactor. The cofactor is Mn(2+). Requires Fe(2+) as cofactor.

The protein resides in the cytoplasm. The catalysed reaction is Release of N-terminal amino acids, preferentially methionine, from peptides and arylamides.. In terms of biological role, cotranslationally removes the N-terminal methionine from nascent proteins. The N-terminal methionine is often cleaved when the second residue in the primary sequence is small and uncharged (Met-Ala-, Cys, Gly, Pro, Ser, Thr, or Val). The protein is Methionine aminopeptidase 2 of Yarrowia lipolytica (strain CLIB 122 / E 150) (Yeast).